The sequence spans 475 residues: Ankyrin repeat, SAM and basic leucine zipper domain-containing protein 1 (475 aa).

Residues 1 to 24 (MAAAVQRGLPVAGGGESSESEDDG) form a disordered region. Residues serine 17, serine 18, and serine 20 each carry the phosphoserine modification. ANK repeat units follow at residues 45–74 (EKNEIFKKALTTGDISLVEELLDSGISVES), 78–107 (YGWTPLMYAASVANVELVRVLLDRGANASF), 110–144 (DKHTVLITACSARGSQEQILKCVELLLSRNADPNV), 148–177 (RLMTPIMYAARDGHPQVVALLVAQGAEVNA), 181–210 (NGYTALTWAARQGHKNVVLKLLELGANKML), and 214–243 (DGKTPSEVANKNKHPEIFSLLSLTLNPLEG). The SAM domain occupies 272–334 (SYAAFGDLEI…KILAALKELA (63 aa)).

As to quaternary structure, interacts with DDX4, PIWIL1, RANBP9 and TDRD1.

The protein resides in the cytoplasm. Its function is as follows. Plays a central role during spermatogenesis by repressing transposable elements and preventing their mobilization, which is essential for the germline integrity. Acts via the piRNA metabolic process, which mediates the repression of transposable elements during meiosis by forming complexes composed of piRNAs and Piwi proteins and governs the methylation and subsequent repression of transposons. Its association with pi-bodies suggests a participation in the primary piRNAs metabolic process. Required prior to the pachytene stage to facilitate the production of multiple types of piRNAs, including those associated with repeats involved in the regulation of retrotransposons. May act by mediating protein-protein interactions during germ cell maturation. The polypeptide is Ankyrin repeat, SAM and basic leucine zipper domain-containing protein 1 (ASZ1) (Loxodonta africana (African elephant)).